The following is a 431-amino-acid chain: Helix-loop-helix protein 11 (431 aa).

A disordered region spans residues 88–109; sequence LANRSLSQPAPLSPTSLDPDRR. A compositionally biased stretch (polar residues) spans 91-103; sequence RSLSQPAPLSPTS. The region spanning 112-163 is the bHLH domain; the sequence is MRRQIANCNERRRMQSINAGFLALRALLPRKEGEKLSKAAILQQTADMVHQL. Polar residues-rich tracts occupy residues 226-241 and 248-257; these read TTTS…PRSN and LPSSYASSAL. Residues 226 to 311 form a disordered region; that stretch reads TTTSSQASSP…PPPTLPSLET (86 aa). Low complexity predominate over residues 274 to 291; that stretch reads TTSTPLSLLTLNGSPTSS.

Expressed in the pharynx, nerve cords, the H-shaped excretory cell, vulva muscles, and the anal depressor (at protein level). Expressed in the intestine (at protein level). In males, it is also expressed in the spicules and hyp7 cells of the hypodermis (at protein level).

The protein localises to the nucleus. In terms of biological role, transcriptional regulator. Component of a feedback loop involving atfs-1, atgl-1 and hlh-11. Binds to the promoter of the atgl-1 lipase to negatively regulate the expression of atgl-1, and thereby promoting fat oxidation in response to mitochondrial stress and mitochondrial respiration in the intestine. In addition, functions with atfs-1 to maintain lifespan. May have a role in fertility and in positively regulating body size. This Caenorhabditis elegans protein is Helix-loop-helix protein 11.